Here is a 358-residue protein sequence, read N- to C-terminus: Fructose-bisphosphate aldolase 6, cytosolic (358 aa).

S2 carries the post-translational modification N-acetylserine. Residue R39 coordinates substrate. At C68 the chain carries S-glutathionyl cysteine; transient. Residue C173 is modified to S-glutathionyl cysteine; transient; alternate. S-nitrosocysteine; transient; alternate is present on C173. E183 (proton acceptor) is an active-site residue. K225 functions as the Schiff-base intermediate with dihydroxyacetone-P in the catalytic mechanism. Residues 266–268 and R298 contribute to the substrate site; that span reads SGG. S350 carries the phosphoserine modification. K354 bears the N6,N6,N6-trimethyllysine mark.

The protein belongs to the class I fructose-bisphosphate aldolase family. As to quaternary structure, homotetramer. Interacts with TRX1 and TRX3. Interacts with GAPC1 and VDAC3. Post-translationally, S-glutathionylated at Cys-68 and Cys-173. In terms of processing, S-nitrosylated at Cys-173. As to expression, expressed in roots, rosettes leaves, cauline leaves, stems and flowers.

The protein resides in the cytoplasm. The protein localises to the cytosol. Its subcellular location is the nucleus. It is found in the mitochondrion. The enzyme catalyses beta-D-fructose 1,6-bisphosphate = D-glyceraldehyde 3-phosphate + dihydroxyacetone phosphate. Its pathway is carbohydrate degradation; glycolysis; D-glyceraldehyde 3-phosphate and glycerone phosphate from D-glucose: step 4/4. Total and irreversible inhibition by S-nitrosoglutathione (GSNO). Partial and reversible inhibition by oxidized glutathione (GSSG). Its function is as follows. Fructose-bisphosphate aldolase that plays a key role in glycolysis and gluconeogenesis. Associates with GAPC1 to the outer mitochondrial membrane, in a redox-dependent manner, leading to binding and bundling of actin. Actin binding and bundling occurs under oxidizing conditions and is reversible under reducing conditions. May be part of a redox-dependent retrograde signal transduction network for adaptation upon oxidative stress. The protein is Fructose-bisphosphate aldolase 6, cytosolic of Arabidopsis thaliana (Mouse-ear cress).